Consider the following 521-residue polypeptide: Glutamate--cysteine ligase (521 aa).

Belongs to the glutamate--cysteine ligase type 1 family. Type 1 subfamily.

The catalysed reaction is L-cysteine + L-glutamate + ATP = gamma-L-glutamyl-L-cysteine + ADP + phosphate + H(+). Its pathway is sulfur metabolism; glutathione biosynthesis; glutathione from L-cysteine and L-glutamate: step 1/2. This Aliivibrio salmonicida (strain LFI1238) (Vibrio salmonicida (strain LFI1238)) protein is Glutamate--cysteine ligase.